The following is a 454-amino-acid chain: CBL-interacting protein kinase 4 (454 aa).

A Protein kinase domain is found at 25 to 284 (YELGRMLGRG…ESLAAHHPWF (260 aa)). ATP is bound by residues 31-39 (LGRGTFAKV) and lysine 54. The active-site Proton acceptor is aspartate 151. Positions 169-198 (DFGLAALPDTLRDDGRLHTACGTPAYAAPE) are activation loop. The NAF domain occupies 311-335 (APPPPLNAFDIISMSPGLDLSGLFG). Residues 341-370 (LREKRFTTTASPEKTLEQLGLAGGKLGYVV) form a PPI region.

The protein belongs to the protein kinase superfamily. CAMK Ser/Thr protein kinase family. SNF1 subfamily. Mn(2+) is required as a cofactor.

The catalysed reaction is L-seryl-[protein] + ATP = O-phospho-L-seryl-[protein] + ADP + H(+). The enzyme catalyses L-threonyl-[protein] + ATP = O-phospho-L-threonyl-[protein] + ADP + H(+). Functionally, CIPK serine-threonine protein kinases interact with CBL proteins. Binding of a CBL protein to the regulatory NAF domain of CIPK protein lead to the activation of the kinase in a calcium-dependent manner. The sequence is that of CBL-interacting protein kinase 4 (CIPK4) from Oryza sativa subsp. japonica (Rice).